We begin with the raw amino-acid sequence, 165 residues long: Large ribosomal subunit protein uL11 (165 aa).

S38 carries the post-translational modification Phosphoserine. K40 participates in a covalent cross-link: Glycyl lysine isopeptide (Lys-Gly) (interchain with G-Cter in SUMO2). Residue K48 forms a Glycyl lysine isopeptide (Lys-Gly) (interchain with G-Cter in ubiquitin) linkage. An N6-acetyllysine modification is found at K54. K83 is covalently cross-linked (Glycyl lysine isopeptide (Lys-Gly) (interchain with G-Cter in ubiquitin)). Position 165 is a phosphoserine (S165).

The protein belongs to the universal ribosomal protein uL11 family. As to quaternary structure, component of the large ribosomal subunit. Mature ribosomes consist of a small (40S) and a large (60S) subunit. The 40S subunit contains about 33 different proteins and 1 molecule of RNA (18S). The 60S subunit contains about 49 different proteins and 3 molecules of RNA (28S, 5.8S and 5S). Post-translationally, ubiquitinated at Lys-48 and Lys-83 by RNF14 and RNF25 in response to ribosome collisions (ribosome stalling).

The protein resides in the cytoplasm. In terms of biological role, component of the large ribosomal subunit. The ribosome is a large ribonucleoprotein complex responsible for the synthesis of proteins in the cell. Binds directly to 26S ribosomal RNA. This is Large ribosomal subunit protein uL11 (RPL12) from Chinchilla lanigera (Long-tailed chinchilla).